Consider the following 568-residue polypeptide: Proline--tRNA ligase (568 aa).

It belongs to the class-II aminoacyl-tRNA synthetase family. ProS type 1 subfamily. As to quaternary structure, homodimer.

The protein localises to the cytoplasm. The catalysed reaction is tRNA(Pro) + L-proline + ATP = L-prolyl-tRNA(Pro) + AMP + diphosphate. Functionally, catalyzes the attachment of proline to tRNA(Pro) in a two-step reaction: proline is first activated by ATP to form Pro-AMP and then transferred to the acceptor end of tRNA(Pro). As ProRS can inadvertently accommodate and process non-cognate amino acids such as alanine and cysteine, to avoid such errors it has two additional distinct editing activities against alanine. One activity is designated as 'pretransfer' editing and involves the tRNA(Pro)-independent hydrolysis of activated Ala-AMP. The other activity is designated 'posttransfer' editing and involves deacylation of mischarged Ala-tRNA(Pro). The misacylated Cys-tRNA(Pro) is not edited by ProRS. This chain is Proline--tRNA ligase, found in Chlamydia pneumoniae (Chlamydophila pneumoniae).